Here is a 304-residue protein sequence, read N- to C-terminus: E3 ubiquitin-protein ligase BOI (304 aa).

The WRD domain stretch occupies residues 178-214; sequence LQERVKSLYVENQIWRDIAQTNEANANTLRTNLDQVL. The stretch at 197–220 forms a coiled coil; the sequence is QTNEANANTLRTNLDQVLAQLETF. The segment at 254–291 adopts an RING-type zinc-finger fold; the sequence is CKRCGEREASVLVLPCRHLCLCTVCGGSALLRTCPVCD.

In terms of assembly, interacts with MYB108/BOS1 and the DELLA proteins GAI, RGA, RGL1, RGL2 and RGL3. Expressed in leaves, siliques, roots, flowering tissues and stigma tips.

Its subcellular location is the nucleus. It catalyses the reaction S-ubiquitinyl-[E2 ubiquitin-conjugating enzyme]-L-cysteine + [acceptor protein]-L-lysine = [E2 ubiquitin-conjugating enzyme]-L-cysteine + N(6)-ubiquitinyl-[acceptor protein]-L-lysine.. It functions in the pathway protein degradation; proteasomal ubiquitin-dependent pathway. In terms of biological role, E3 ubiquitin-protein ligase involved in the regulation of pathogen and abiotic stress responses by facilitating degradation of MYB108/BOI. Attenuates cell death by preventing caspase activation. Has no effect on the stability of the DELLA proteins. Not regulated by MYB108/BOI. This Arabidopsis thaliana (Mouse-ear cress) protein is E3 ubiquitin-protein ligase BOI (BOI).